Here is a 312-residue protein sequence, read N- to C-terminus: uncharacterized protein (312 aa).

The HTH lysR-type domain occupies 8–65 (PGLTCFEIFLAIAEAGSLGGAARELGLTQQAVSRRLASMEAQIGVRLAIRTTRGSQLT). The H-T-H motif DNA-binding region spans 25-45 (LGGAARELGLTQQAVSRRLAS).

It belongs to the LysR transcriptional regulatory family.

This is an uncharacterized protein from Mycobacterium tuberculosis (strain CDC 1551 / Oshkosh).